A 3681-amino-acid chain; its full sequence is E3 ubiquitin-protein ligase UPL1 (3681 aa).

Residues 882–891 (DEKKSVDRGS) show a composition bias toward basic and acidic residues. The tract at residues 882–912 (DEKKSVDRGSDNSVSASSSTAERESDEDSSN) is disordered. Positions 892–901 (DNSVSASSST) are enriched in low complexity. One can recognise a UBA domain in the interval 1269-1310 (QLDESIVGMIVEMGFSRSRAEIALRRVGTNSVEMAMDWLFTN). Residues 1316 to 1335 (QEDDELAQALALSLGNSSET) form the UIM domain. Disordered stretches follow at residues 1332-1358 (SSET…KEPP), 1768-1802 (MEVD…KAEI), 2015-2094 (EQLK…MRIE), 2125-2151 (ENRA…EDAD), 2253-2287 (RQTG…TASV), 2401-2435 (NTTE…QSEE), 2483-2505 (PLPL…DGAP), 2537-2606 (IAPP…APEV), 2975-3003 (SPSS…DAES), and 3228-3254 (TAGE…KTDG). Composition is skewed to basic and acidic residues over residues 1336–1345 (PKLEDTEKPV), 1782–1802 (KVGE…KAEI), and 2017–2037 (LKSE…HDSH). Polar residues predominate over residues 2038 to 2087 (GNSTETEADELNQNNSSLQQVTDAAGNGQEQAQVSSQSAGERGSSQTQAM). Residues 2130–2151 (DDVDDDMGDEGEDDEGDDEDAD) are compositionally biased toward acidic residues. Residues 2253-2265 (RQTGRSSLDRSGS) show a composition bias toward basic and acidic residues. Polar residues predominate over residues 2277–2287 (RPSQTGNTASV). Position 2598 is a phosphoserine (serine 2598). Residues 2982–3002 (EKLENKPVGEEASSETRKDAE) are compositionally biased toward basic and acidic residues. Residues 3237-3247 (AHGSSSKTSVD) are compositionally biased toward polar residues. Positions 3340-3681 (SPQDLKGRLN…HEASEGFGFA (342 aa)) constitute an HECT domain. Cysteine 3648 serves as the catalytic Glycyl thioester intermediate.

This sequence belongs to the UPL family. TOM1/PTR1 subfamily. Widely expressed. Expressed in root, stem, cauline and rosette leaf, seedling and flower (at protein level).

The enzyme catalyses S-ubiquitinyl-[E2 ubiquitin-conjugating enzyme]-L-cysteine + [acceptor protein]-L-lysine = [E2 ubiquitin-conjugating enzyme]-L-cysteine + N(6)-ubiquitinyl-[acceptor protein]-L-lysine.. The protein operates within protein modification; protein ubiquitination. Functionally, probable E3 ubiquitin-protein ligase which mediates ubiquitination and subsequent proteasomal degradation of target proteins. The chain is E3 ubiquitin-protein ligase UPL1 (UPL1) from Arabidopsis thaliana (Mouse-ear cress).